An 82-amino-acid polypeptide reads, in one-letter code: MGMSKSIKVILSLALVVFLALAGTKVEASVRYITYPAIDRGDHAVHCDKAHPNTCKKKQANPYRRGCGVLEGCHRETGPKPT.

The N-terminal stretch at M1–A28 is a signal peptide. Cystine bridges form between C47/C55 and C67/C73.

It belongs to the plant rapid alkalinization factor (RALF) family. As to expression, expressed in leaves and flowers.

It is found in the secreted. Functionally, cell signaling peptide that may regulate plant stress, growth, and development. Mediates a rapid alkalinization of extracellular space by mediating a transient increase in the cytoplasmic Ca(2+) concentration leading to a calcium-dependent signaling events through a cell surface receptor and a concomitant activation of some intracellular mitogen-activated protein kinases. The protein is Protein RALF-like 8 (RALFL8) of Arabidopsis thaliana (Mouse-ear cress).